The following is a 148-amino-acid chain: tRNA-specific adenosine deaminase (148 aa).

Residues 1–116 (MEQALKQARL…SNLRYFNSSA (116 aa)) form the CMP/dCMP-type deaminase domain. Histidine 48 serves as a coordination point for Zn(2+). Catalysis depends on glutamate 50, which acts as the Proton donor. The Zn(2+) site is built by cysteine 78 and cysteine 81.

Belongs to the cytidine and deoxycytidylate deaminase family. Homodimer. Zn(2+) serves as cofactor.

It carries out the reaction adenosine(34) in tRNA + H2O + H(+) = inosine(34) in tRNA + NH4(+). Catalyzes the deamination of adenosine to inosine at the wobble position 34 of tRNA(Arg2). The chain is tRNA-specific adenosine deaminase from Rickettsia typhi (strain ATCC VR-144 / Wilmington).